A 151-amino-acid chain; its full sequence is Superoxide dismutase [Cu-Zn] (151 aa).

The S-palmitoyl cysteine moiety is linked to residue cysteine 6. Histidine 45, histidine 47, and histidine 62 together coordinate Cu cation. A disulfide bond links cysteine 56 and cysteine 144. Positions 62, 70, 79, and 82 each coordinate Zn(2+). Histidine 118 provides a ligand contact to Cu cation.

It belongs to the Cu-Zn superoxide dismutase family. Homodimer. Cu cation serves as cofactor. Zn(2+) is required as a cofactor.

The protein resides in the cytoplasm. The protein localises to the nucleus. It catalyses the reaction 2 superoxide + 2 H(+) = H2O2 + O2. Destroys radicals which are normally produced within the cells and which are toxic to biological systems. The polypeptide is Superoxide dismutase [Cu-Zn] (sod1) (Xenopus tropicalis (Western clawed frog)).